We begin with the raw amino-acid sequence, 428 residues long: Enolase (428 aa).

Position 163 (Gln163) interacts with (2R)-2-phosphoglycerate. The active-site Proton donor is the Glu205. Asp242, Glu285, and Asp312 together coordinate Mg(2+). (2R)-2-phosphoglycerate contacts are provided by Lys337, Arg366, Ser367, and Lys388. Lys337 acts as the Proton acceptor in catalysis.

Belongs to the enolase family. Requires Mg(2+) as cofactor.

The protein localises to the cytoplasm. The protein resides in the secreted. It localises to the cell surface. The catalysed reaction is (2R)-2-phosphoglycerate = phosphoenolpyruvate + H2O. It participates in carbohydrate degradation; glycolysis; pyruvate from D-glyceraldehyde 3-phosphate: step 4/5. In terms of biological role, catalyzes the reversible conversion of 2-phosphoglycerate (2-PG) into phosphoenolpyruvate (PEP). It is essential for the degradation of carbohydrates via glycolysis. The protein is Enolase of Nitrosomonas eutropha (strain DSM 101675 / C91 / Nm57).